A 322-amino-acid polypeptide reads, in one-letter code: Probable ATP-dependent 6-phosphofructokinase (322 aa).

ATP is bound by residues Gly-11, Arg-72–Phe-73, and Gly-102–Ser-105. Position 103 (Asp-103) interacts with Mg(2+). Substrate is bound by residues Thr-125–Asp-127, Met-169–Arg-171, Glu-222, Lys-249, and Tyr-255–Arg-258. Catalysis depends on Asp-127, which acts as the Proton acceptor.

This sequence belongs to the phosphofructokinase type A (PFKA) family. In terms of assembly, homotetramer. Mg(2+) serves as cofactor.

It is found in the cytoplasm. It carries out the reaction beta-D-fructose 6-phosphate + ATP = beta-D-fructose 1,6-bisphosphate + ADP + H(+). It functions in the pathway carbohydrate degradation; glycolysis; D-glyceraldehyde 3-phosphate and glycerone phosphate from D-glucose: step 3/4. Functionally, catalyzes the phosphorylation of D-fructose 6-phosphate to fructose 1,6-bisphosphate by ATP, the first committing step of glycolysis. This Malacoplasma penetrans (strain HF-2) (Mycoplasma penetrans) protein is Probable ATP-dependent 6-phosphofructokinase (pfkA).